Reading from the N-terminus, the 974-residue chain is Kinesin-like protein KIN-7A (974 aa).

The segment at 1-29 (MTIKTPGTPVSKMDRTPAVTPGGSSRSRE) is disordered. Residues 31–353 (KIVVTVRLRP…LYFANRAKEV (323 aa)) enclose the Kinesin motor domain. ATP is bound at residue 117–124 (GQTSSGKT). 2 coiled-coil regions span residues 362 to 435 (VVSD…KGLN) and 565 to 603 (SANL…VMSL). 2 disordered regions span residues 605–649 (SNIS…PCSP) and 663–713 (NKAP…SSVN). Basic residues predominate over residues 616 to 628 (TKNHHHQSKKKKL). 2 stretches are compositionally biased toward polar residues: residues 638-649 (NRQNFLKSPCSP) and 666-682 (PQEN…TPQG). Basic and acidic residues predominate over residues 683–693 (SEKETPQKGEE).

The protein belongs to the TRAFAC class myosin-kinesin ATPase superfamily. Kinesin family. KIN-7 subfamily. In terms of processing, phosphorylated at Thr-145, Thr-687 and Thr-703 by CDKAs and CDKBs. Phosphorylated NACK1 fails to mediate cytokinesis. In terms of tissue distribution, expressed in roots, flowers, pollen mother cells and embryos.

It is found in the cytoplasm. The protein localises to the cytoskeleton. The protein resides in the phragmoplast. Functionally, probable plus end-directed motor protein that functions in the NACK-PQR (ANP1-MKK6-MPK4) MAP kinase signaling pathway, which is essential for somatic cell cytokinesis, especially for the cell-plate formation and its expansion. Regulates the activity and the localization of ANP1, probably by association through the non-catalytic region of the kinase. Functionally redundant with NACK2 and essential to promote the progression of cytokinesis and for cellularization (formation of the cell plate) during microgametogenesis and megagametogenesis. This Arabidopsis thaliana (Mouse-ear cress) protein is Kinesin-like protein KIN-7A.